We begin with the raw amino-acid sequence, 100 residues long: Urease subunit gamma (100 aa).

Belongs to the urease gamma subunit family. As to quaternary structure, heterotrimer of UreA (gamma), UreB (beta) and UreC (alpha) subunits. Three heterotrimers associate to form the active enzyme.

It localises to the cytoplasm. It catalyses the reaction urea + 2 H2O + H(+) = hydrogencarbonate + 2 NH4(+). The protein operates within nitrogen metabolism; urea degradation; CO(2) and NH(3) from urea (urease route): step 1/1. This is Urease subunit gamma from Teredinibacter turnerae (strain ATCC 39867 / T7901).